The following is an 897-amino-acid chain: High molecular weight rhoptry protein 3 (897 aa).

Residues 1-24 (MRSKHLVTLFIITFLSFSTVKVWG) form the signal peptide. Disulfide bonds link Cys-157-Cys-231, Cys-244-Cys-253, Cys-262-Cys-276, Cys-421-Cys-620, and Cys-475-Cys-536. A helical transmembrane segment spans residues 597–615 (FVLYFISIISVLYINEYYY). Disordered regions lie at residues 788 to 845 (KEQS…SNLK) and 859 to 897 (QLDKEKPKKKKSKRKKKRDSSSDRILLEESKTFTSENEL). The segment covering 792-801 (KSTSAASTSD) has biased composition (polar residues). Positions 802–817 (ELSGSEGPSTESTSTG) are enriched in low complexity. At Ser-804 the chain carries Phosphoserine. Residues 820 to 832 (GEDKTTDNTYKEM) show a composition bias toward basic and acidic residues. Basic residues predominate over residues 865-876 (PKKKKSKRKKKR). Residues 877–889 (DSSSDRILLEESK) are compositionally biased toward basic and acidic residues.

Component of the RhopH complex, composed of CLAG3.1/CLAG3.2, RhopH2 and RhopH3 with a 1:1:1 subunit stoichiometry. Interacts with CLAG3.1/CLAG3.2. Interacts with CDPK1; the interaction promotes RhopH3 phosphorylation in merozoites. Proteolytically cleaved near C-terminus.

It is found in the host cell membrane. It localises to the parasitophorous vacuole membrane. The protein localises to the cytoplasmic vesicle. The protein resides in the secretory vesicle. Its subcellular location is the rhoptry. Participates in the formation of new permeability pathways in Plasmodium-infected erythrocytes enabling the uptake of nutrients from the blood plasma. Required for maintaining invasion capacity of merozoites. Required for the trophozoite to schizont developmental transition of the intracellular parasite. The polypeptide is High molecular weight rhoptry protein 3 (Plasmodium falciparum).